A 225-amino-acid chain; its full sequence is Uracil-DNA glycosylase (225 aa).

D65 functions as the Proton acceptor in the catalytic mechanism.

It belongs to the uracil-DNA glycosylase (UDG) superfamily. UNG family.

The protein localises to the cytoplasm. The enzyme catalyses Hydrolyzes single-stranded DNA or mismatched double-stranded DNA and polynucleotides, releasing free uracil.. Functionally, excises uracil residues from the DNA which can arise as a result of misincorporation of dUMP residues by DNA polymerase or due to deamination of cytosine. The sequence is that of Uracil-DNA glycosylase from Bacillus thuringiensis (strain Al Hakam).